Consider the following 298-residue polypeptide: Ethanolamine ammonia-lyase small subunit (298 aa).

A disordered region spans residues 17–37 (MGQDVPQPVAPSKQEGAKPQC). Residues Val210, Glu231, and Cys261 each contribute to the adenosylcob(III)alamin site.

The protein belongs to the EutC family. In terms of assembly, the basic unit is a heterodimer which dimerizes to form tetramers. The heterotetramers trimerize; 6 large subunits form a core ring with 6 small subunits projecting outwards. Adenosylcob(III)alamin serves as cofactor.

It localises to the bacterial microcompartment. The catalysed reaction is ethanolamine = acetaldehyde + NH4(+). It participates in amine and polyamine degradation; ethanolamine degradation. In terms of biological role, catalyzes the deamination of various vicinal amino-alcohols to oxo compounds. Allows this organism to utilize ethanolamine as the sole source of nitrogen and carbon in the presence of external vitamin B12. This chain is Ethanolamine ammonia-lyase small subunit, found in Salmonella paratyphi A (strain ATCC 9150 / SARB42).